A 427-amino-acid polypeptide reads, in one-letter code: Flotillin-1 (427 aa).

3 positions are modified to phosphoserine: Ser-19, Ser-163, and Ser-385. At Thr-387 the chain carries Phosphothreonine.

It belongs to the band 7/mec-2 family. Flotillin subfamily. In terms of assembly, heterooligomeric complex of flotillin-1 and flotillin-2 and caveolin-1 and caveolin-2. Interacts with ECPAS.

It is found in the cell membrane. The protein resides in the endosome. Its subcellular location is the membrane. It localises to the caveola. The protein localises to the melanosome. It is found in the membrane raft. In terms of biological role, may act as a scaffolding protein within caveolar membranes, functionally participating in formation of caveolae or caveolae-like vesicles. In Macaca mulatta (Rhesus macaque), this protein is Flotillin-1 (FLOT1).